We begin with the raw amino-acid sequence, 370 residues long: Anhydro-N-acetylmuramic acid kinase (370 aa).

ATP is bound at residue 12–19; that stretch reads GTSLDGVD.

It belongs to the anhydro-N-acetylmuramic acid kinase family.

The catalysed reaction is 1,6-anhydro-N-acetyl-beta-muramate + ATP + H2O = N-acetyl-D-muramate 6-phosphate + ADP + H(+). It participates in amino-sugar metabolism; 1,6-anhydro-N-acetylmuramate degradation. The protein operates within cell wall biogenesis; peptidoglycan recycling. Catalyzes the specific phosphorylation of 1,6-anhydro-N-acetylmuramic acid (anhMurNAc) with the simultaneous cleavage of the 1,6-anhydro ring, generating MurNAc-6-P. Is required for the utilization of anhMurNAc either imported from the medium or derived from its own cell wall murein, and thus plays a role in cell wall recycling. The sequence is that of Anhydro-N-acetylmuramic acid kinase from Pectobacterium carotovorum subsp. carotovorum (strain PC1).